Reading from the N-terminus, the 697-residue chain is Elongation factor G (697 aa).

One can recognise a tr-type G domain in the interval 8–282; sequence EDYRNIGIMA…AIVDYLPSPL (275 aa). Residues 17–24, 81–85, and 135–138 contribute to the GTP site; these read AHIDAGKT, DTPGH, and NKMD.

It belongs to the TRAFAC class translation factor GTPase superfamily. Classic translation factor GTPase family. EF-G/EF-2 subfamily.

The protein resides in the cytoplasm. Its function is as follows. Catalyzes the GTP-dependent ribosomal translocation step during translation elongation. During this step, the ribosome changes from the pre-translocational (PRE) to the post-translocational (POST) state as the newly formed A-site-bound peptidyl-tRNA and P-site-bound deacylated tRNA move to the P and E sites, respectively. Catalyzes the coordinated movement of the two tRNA molecules, the mRNA and conformational changes in the ribosome. This Metamycoplasma arthritidis (strain 158L3-1) (Mycoplasma arthritidis) protein is Elongation factor G.